The primary structure comprises 629 residues: Transmembrane 9 superfamily protein C1105.08 (629 aa).

The signal sequence occupies residues 1-26 (MLLPSIPSCSFSFVVFVSVLLQTCFS). Over 27–266 (FQLTPLSPKN…MHIESRQIRW (240 aa)) the chain is Lumenal. Asn157 carries an N-linked (GlcNAc...) asparagine glycan. The chain crosses the membrane as a helical span at residues 267–287 (IFIIHSAIIDTFLIFVVSIIL). At 288–337 (YRTLNRDINKYNSAFVDQEDVQEDFGWKLVHGDVFRPPRRPMLFSILLGT) the chain is on the cytoplasmic side. Residues 338–358 (GAQLLFMSSGIVLFAIFGIVA) traverse the membrane as a helical segment. Topologically, residues 359–364 (PSRRGS) are lumenal. The helical transmembrane segment at 365-385 (LATATVALFIISGFVSGYVSA) threads the bilayer. The Cytoplasmic portion of the chain corresponds to 386–401 (LSYKLMQGMLRKRNLL). The helical transmembrane segment at 402–422 (LTPFVVPGFMLAAALFFNMVF) threads the bilayer. At 423 to 436 (WSKSSSSTVPFSSW) the chain is on the lumenal side. Residues 437 to 457 (LLLIFLYLLFTVPLSFVGSLI) traverse the membrane as a helical segment. At 458–488 (GFRSREFVPPVRTNQIPRQIPSHSIWLSSFP) the chain is on the cytoplasmic side. Residues 489–509 (SAIIGGSIPFLVILIELFSIL) traverse the membrane as a helical segment. Residues 510–519 (DSLWFHPLYF) are Lumenal-facing. The helical transmembrane segment at 520–544 (MFGFSFFCFGILVTTCIMVSIITVY) threads the bilayer. The Cytoplasmic portion of the chain corresponds to 545–558 (FQLCSENYNWWWRS). The chain crosses the membrane as a helical span at residues 559-579 (FITPGFCGIYVFIFSVFYWFF). Topologically, residues 580 to 598 (KISSSSLATAVLYFGYSLL) are lumenal. A helical membrane pass occupies residues 599–619 (ISVLVFFLCGSVGFFGAFLFV). Over 620 to 629 (NKIYASIKID) the chain is Cytoplasmic.

The protein belongs to the nonaspanin (TM9SF) (TC 9.A.2) family.

The protein localises to the golgi apparatus membrane. It is found in the vacuole membrane. The sequence is that of Transmembrane 9 superfamily protein C1105.08 from Schizosaccharomyces pombe (strain 972 / ATCC 24843) (Fission yeast).